The chain runs to 112 residues: Ribosome-binding factor A (112 aa).

Belongs to the RbfA family. In terms of assembly, monomer. Binds 30S ribosomal subunits, but not 50S ribosomal subunits or 70S ribosomes.

It is found in the cytoplasm. Its function is as follows. One of several proteins that assist in the late maturation steps of the functional core of the 30S ribosomal subunit. Associates with free 30S ribosomal subunits (but not with 30S subunits that are part of 70S ribosomes or polysomes). Required for efficient processing of 16S rRNA. May interact with the 5'-terminal helix region of 16S rRNA. The sequence is that of Ribosome-binding factor A from Mycoplasma genitalium (strain ATCC 33530 / DSM 19775 / NCTC 10195 / G37) (Mycoplasmoides genitalium).